The sequence spans 240 residues: Ribonuclease 3 (240 aa).

Residues 10–136 (VREFQETVGV…LIGAVYLDRG (127 aa)) enclose the RNase III domain. E49 contributes to the Mg(2+) binding site. D53 is an active-site residue. The Mg(2+) site is built by D122 and E125. Residue E125 is part of the active site. A DRBM domain is found at 163–231 (DWKTSLQELT…AESAWKAIRA (69 aa)). The disordered stretch occupies residues 205 to 240 (TYGSGEGRSKKEAEQQAAESAWKAIRAATEKAKQES). The segment covering 219 to 228 (QQAAESAWKA) has biased composition (low complexity).

It belongs to the ribonuclease III family. In terms of assembly, homodimer. It depends on Mg(2+) as a cofactor.

It localises to the cytoplasm. The enzyme catalyses Endonucleolytic cleavage to 5'-phosphomonoester.. In terms of biological role, digests double-stranded RNA. Involved in the processing of primary rRNA transcript to yield the immediate precursors to the large and small rRNAs (23S and 16S). Processes some mRNAs, and tRNAs when they are encoded in the rRNA operon. Processes pre-crRNA and tracrRNA of type II CRISPR loci if present in the organism. This chain is Ribonuclease 3, found in Thermobifida fusca (strain YX).